The primary structure comprises 157 residues: Mini-ribonuclease 3 (157 aa).

Asp-18 is a catalytic residue. Residues 126 to 157 (EEDEGKGKGETAKEEESITDALSPAEQSEIDC) are disordered. The span at 130–141 (GKGKGETAKEEE) shows a compositional bias: basic and acidic residues.

Belongs to the MrnC RNase family. Homodimer. It depends on Mg(2+) as a cofactor.

The protein resides in the cytoplasm. Involved in correct processing of both the 5' and 3' ends of 23S rRNA precursor. Processes 30S rRNA precursor transcript even in absence of ribonuclease 3 (Rnc); Rnc processes 30S rRNA into smaller rRNA precursors. In Desulfitobacterium hafniense (strain Y51), this protein is Mini-ribonuclease 3.